The sequence spans 481 residues: Aspartyl/glutamyl-tRNA(Asn/Gln) amidotransferase subunit B (481 aa).

This sequence belongs to the GatB/GatE family. GatB subfamily. In terms of assembly, heterotrimer of A, B and C subunits.

It carries out the reaction L-glutamyl-tRNA(Gln) + L-glutamine + ATP + H2O = L-glutaminyl-tRNA(Gln) + L-glutamate + ADP + phosphate + H(+). The enzyme catalyses L-aspartyl-tRNA(Asn) + L-glutamine + ATP + H2O = L-asparaginyl-tRNA(Asn) + L-glutamate + ADP + phosphate + 2 H(+). Functionally, allows the formation of correctly charged Asn-tRNA(Asn) or Gln-tRNA(Gln) through the transamidation of misacylated Asp-tRNA(Asn) or Glu-tRNA(Gln) in organisms which lack either or both of asparaginyl-tRNA or glutaminyl-tRNA synthetases. The reaction takes place in the presence of glutamine and ATP through an activated phospho-Asp-tRNA(Asn) or phospho-Glu-tRNA(Gln). The chain is Aspartyl/glutamyl-tRNA(Asn/Gln) amidotransferase subunit B from Ehrlichia ruminantium (strain Gardel).